The sequence spans 1308 residues: Tau-tubulin kinase 1 (1308 aa).

Residues 34-297 (WKVLKKIGGG…LIMSVFENSM (264 aa)) form the Protein kinase domain. ATP contacts are provided by residues 40 to 48 (IGGGGFGEI) and Lys63. Asp154 (proton acceptor) is an active-site residue. 6 disordered regions span residues 364 to 397 (LSDQENAPPILPGRPPEGLGPGPHLVPHPGGPEA), 418 to 448 (PCVEEEQSRGVGVPSSPVRAPPDSPTTPVRS), 474 to 671 (ERRS…APPF), 720 to 899 (QVPL…AGGG), 985 to 1085 (EMES…LARL), and 1097 to 1308 (RLAS…PGAR). Ser441 is subject to Phosphoserine. Residues 485–496 (PSRQACSSQPAQ) show a composition bias toward polar residues. The residue at position 541 (Ser541) is a Phosphoserine. Composition is skewed to basic and acidic residues over residues 541–555 (SKEWVIIDKETELKD) and 574–589 (ELRPLPEEGEERRRLG). Positions 638–647 (SPSHSPLHSG) are enriched in low complexity. Positions 735 to 769 (GEEEEEEEEEEEEEEEEEEEEEEEEEEEEEEEEEA) are enriched in acidic residues. Over residues 786–795 (GSERSTERSQ) the composition is skewed to basic and acidic residues. 2 stretches are compositionally biased toward polar residues: residues 868–885 (PTGSQLDVSEPGTLSSIL) and 1020–1035 (ASQQEPVTKKGTTISP). Residues 1097 to 1107 (RLASGASSSSS) show a composition bias toward low complexity.

The protein belongs to the protein kinase superfamily. CK1 Ser/Thr protein kinase family. Requires Mg(2+) as cofactor. The cofactor is Mn(2+). Expressed in the brain. Strong expression in the cortical layers, the CA1 layers of the hippocampus and the granular layer of the cerebellum. Also expressed in the large cortical pyramidal cells in the temporal cortex, the CA1 pyramidal neurons and the cerebellum granular neurons.

Its subcellular location is the cytoplasm. It carries out the reaction L-seryl-[protein] + ATP = O-phospho-L-seryl-[protein] + ADP + H(+). It catalyses the reaction L-threonyl-[protein] + ATP = O-phospho-L-threonyl-[protein] + ADP + H(+). In terms of biological role, serine/threonine kinase which is able to phosphorylate TAU on serine, threonine and tyrosine residues. Induces aggregation of TAU. This is Tau-tubulin kinase 1 (Ttbk1) from Mus musculus (Mouse).